The chain runs to 475 residues: Phenolic acid decarboxylase (475 aa).

Residues asparagine 161, histidine 183, and glutamate 225 each coordinate Mn(2+). Prenylated FMN contacts are provided by residues asparagine 161–arginine 166 and methionine 182–histidine 183. The Proton donor role is filled by glutamate 274.

Belongs to the UbiD family. YclC subfamily. Prenylated FMN serves as cofactor. The cofactor is Mn(2+).

The enzyme catalyses 4-hydroxybenzoate + H(+) = phenol + CO2. The catalysed reaction is vanillate + H(+) = guaiacol + CO2. Functionally, involved in the non-oxidative decarboxylation and detoxification of phenolic derivatives under both aerobic and anaerobic conditions. Phenolic acid decarboxylase that catalyzes the reversible decarboxylation of 4-hydroxybenzoate and vanillate. In Escherichia coli O157:H7, this protein is Phenolic acid decarboxylase.